The sequence spans 30 residues: Cyclotide mden-I (30 aa).

The segment at residues 1 to 30 (GIPCGESCVYIPCITTAIGCSCKNKVCYRN) is a cross-link (cyclopeptide (Gly-Asn)). Cystine bridges form between cysteine 4–cysteine 20, cysteine 8–cysteine 22, and cysteine 13–cysteine 27.

It belongs to the cyclotide family. Bracelet subfamily. Post-translationally, this is a cyclic peptide.

Functionally, probably participates in a plant defense mechanism. The protein is Cyclotide mden-I of Melicytus dentatus (Tree violet).